Consider the following 100-residue polypeptide: Aspartyl/glutamyl-tRNA(Asn/Gln) amidotransferase subunit C (100 aa).

It belongs to the GatC family. Heterotrimer of A, B and C subunits.

The enzyme catalyses L-glutamyl-tRNA(Gln) + L-glutamine + ATP + H2O = L-glutaminyl-tRNA(Gln) + L-glutamate + ADP + phosphate + H(+). It catalyses the reaction L-aspartyl-tRNA(Asn) + L-glutamine + ATP + H2O = L-asparaginyl-tRNA(Asn) + L-glutamate + ADP + phosphate + 2 H(+). Its function is as follows. Allows the formation of correctly charged Asn-tRNA(Asn) or Gln-tRNA(Gln) through the transamidation of misacylated Asp-tRNA(Asn) or Glu-tRNA(Gln) in organisms which lack either or both of asparaginyl-tRNA or glutaminyl-tRNA synthetases. The reaction takes place in the presence of glutamine and ATP through an activated phospho-Asp-tRNA(Asn) or phospho-Glu-tRNA(Gln). This is Aspartyl/glutamyl-tRNA(Asn/Gln) amidotransferase subunit C from Rickettsia peacockii (strain Rustic).